A 103-amino-acid chain; its full sequence is Non-histone chromosomal protein HMG-14B (103 aa).

The disordered stretch occupies residues 1–103 (MPKRKVAASR…AVEKEEVKSE (103 aa)). Over residues 29–50 (VPDKAEPKAKALAAKDKSENKK) the composition is skewed to basic and acidic residues. A compositionally biased stretch (basic residues) spans 51–60 (AQSKGKKGPK). Positions 94–103 (AVEKEEVKSE) are enriched in basic and acidic residues.

This sequence belongs to the HMGN family.

The protein localises to the nucleus. Its function is as follows. Binds to the inner side of the nucleosomal DNA thus altering the interaction between the DNA and the histone octamer. May be involved in the process which maintains transcribable genes in a unique chromatin conformation. The polypeptide is Non-histone chromosomal protein HMG-14B (HMG14) (Gallus gallus (Chicken)).